A 242-amino-acid polypeptide reads, in one-letter code: Probable transcriptional regulatory protein EF_0663 (242 aa).

Positions 1 to 14 are enriched in polar residues; that stretch reads MSGHSKWSNIQGRK. A disordered region spans residues 1 to 22; that stretch reads MSGHSKWSNIQGRKNAQDAKRG.

Belongs to the TACO1 family.

It is found in the cytoplasm. The sequence is that of Probable transcriptional regulatory protein EF_0663 from Enterococcus faecalis (strain ATCC 700802 / V583).